Reading from the N-terminus, the 393-residue chain is Telomeric repeat-binding factor 2-interacting protein 1 (393 aa).

Ala-2 bears the N-acetylalanine mark. The BRCT domain maps to 10–101 (DPNGPTHSST…EKLELEAYRL (92 aa)). 2 positions are modified to phosphoserine: Ser-36 and Ser-43. Positions 104-132 (TEQASDPKPGASAEGSTEPEPQPLTGRIA) are disordered. Lys-111 is covalently cross-linked (Glycyl lysine isopeptide (Lys-Gly) (interchain with G-Cter in SUMO2)). In terms of domain architecture, Myb-like spans 125–185 (QPLTGRIAYT…SLKDRYLKHL (61 aa)). Phosphoserine occurs at positions 151 and 153. Lys-191 participates in a covalent cross-link: Glycyl lysine isopeptide (Lys-Gly) (interchain with G-Cter in SUMO2). 2 disordered regions span residues 194–248 (LGNA…EADN) and 272–305 (HITMCDGDPPTPEEDSETQPDEEEEEPKVSTQEV). Ser-200 and Ser-203 each carry phosphoserine. Residues Lys-205, Lys-209, and Lys-237 each participate in a glycyl lysine isopeptide (Lys-Gly) (interchain with G-Cter in SUMO2) cross-link. Residues 223-248 (QNKRTPDLPEEECVKGETKENGEADN) are compositionally biased toward basic and acidic residues. Residues 282–297 (TPEEDSETQPDEEEEE) show a composition bias toward acidic residues. A Glycyl lysine isopeptide (Lys-Gly) (interchain with G-Cter in SUMO2) cross-link involves residue Lys-366. The Nuclear localization signal motif lies at 377 to 393 (KKYGAQNVARRIEFRKK).

The protein belongs to the RAP1 family. Associates with the I-kappa-B-kinase (IKK) core complex, composed of CHUK, IKBKB and IKBKG. Homodimer. Component of the shelterin complex (telosome) composed of TERF1, TERF2, TINF2, TERF2IP ACD and POT1. Interacts with TERF2 (but not TERF1) with its C-terminus. Interacts with SLX4/BTBD12. Interacts with TERF2; the interaction is direct.

It is found in the nucleus. The protein resides in the cytoplasm. The protein localises to the chromosome. Its subcellular location is the telomere. Acts both as a regulator of telomere function and as a transcription regulator. Involved in the regulation of telomere length and protection as a component of the shelterin complex (telosome). In contrast to other components of the shelterin complex, it is dispensible for telomere capping and does not participate in the protection of telomeres against non-homologous end-joining (NHEJ)-mediated repair. Instead, it is required to negatively regulate telomere recombination and is essential for repressing homology-directed repair (HDR), which can affect telomere length. Does not bind DNA directly: recruited to telomeric double-stranded 5'-TTAGGG-3' repeats via its interaction with TERF2. Independently of its function in telomeres, also acts as a transcription regulator: recruited to extratelomeric 5'-TTAGGG-3' sites via its association with TERF2 or other factors, and regulates gene expression. When cytoplasmic, associates with the I-kappa-B-kinase (IKK) complex and acts as a regulator of the NF-kappa-B signaling by promoting IKK-mediated phosphorylation of RELA/p65, leading to activate expression of NF-kappa-B target genes. This Rattus norvegicus (Rat) protein is Telomeric repeat-binding factor 2-interacting protein 1 (Terf2ip).